The following is a 141-amino-acid chain: Hemoglobin subunit alpha-3 (141 aa).

One can recognise a Globin domain in the interval 1-141 (VLSPADKTNV…VSTVLTSKYR (141 aa)). Residue histidine 58 participates in O2 binding. Histidine 87 is a binding site for heme b.

This sequence belongs to the globin family. As to quaternary structure, heterotetramer of two alpha chains and two beta chains. As to expression, red blood cells.

Its function is as follows. Involved in oxygen transport from the lung to the various peripheral tissues. The sequence is that of Hemoglobin subunit alpha-3 from Gorilla gorilla gorilla (Western lowland gorilla).